Here is a 112-residue protein sequence, read N- to C-terminus: Ribonuclease VapC8 (112 aa).

In terms of domain architecture, PINc spans 10–109 (LLDTSVFIAR…TDALIAATAE (100 aa)). Mg(2+) is bound by residues D12 and D101.

This sequence belongs to the PINc/VapC protein family. Requires Mg(2+) as cofactor.

Toxic component of a type II toxin-antitoxin (TA) system. An RNase. The cognate antitoxin is VapB8. In Mycobacterium tuberculosis (strain CDC 1551 / Oshkosh), this protein is Ribonuclease VapC8 (vapC8).